The sequence spans 354 residues: Uroporphyrinogen decarboxylase (354 aa).

Substrate-binding positions include 27 to 31 (RQAGR), aspartate 77, tyrosine 154, serine 209, and histidine 327.

This sequence belongs to the uroporphyrinogen decarboxylase family. Homodimer.

The protein resides in the cytoplasm. The enzyme catalyses uroporphyrinogen III + 4 H(+) = coproporphyrinogen III + 4 CO2. Its pathway is porphyrin-containing compound metabolism; protoporphyrin-IX biosynthesis; coproporphyrinogen-III from 5-aminolevulinate: step 4/4. Functionally, catalyzes the decarboxylation of four acetate groups of uroporphyrinogen-III to yield coproporphyrinogen-III. This is Uroporphyrinogen decarboxylase from Pseudomonas syringae pv. syringae (strain B728a).